Consider the following 385-residue polypeptide: Putative nickel insertion protein (385 aa).

This sequence belongs to the LarC family.

The polypeptide is Putative nickel insertion protein (Citrifermentans bemidjiense (strain ATCC BAA-1014 / DSM 16622 / JCM 12645 / Bem) (Geobacter bemidjiensis)).